Here is a 455-residue protein sequence, read N- to C-terminus: DNA repair protein RadA (455 aa).

The segment at 12–29 (CSECGSYSPKWLGQCPGC) adopts a C4-type zinc-finger fold. ATP is bound at residue 95-102 (GEPGIGKS). The short motif at 252–256 (KNRFG) is the RadA KNRFG motif element. Residues 351–455 (DVFLSIAGGL…TIKDAVRLLQ (105 aa)) form a lon-protease-like region.

This sequence belongs to the RecA family. RadA subfamily.

Its function is as follows. DNA-dependent ATPase involved in processing of recombination intermediates, plays a role in repairing DNA breaks. Stimulates the branch migration of RecA-mediated strand transfer reactions, allowing the 3' invading strand to extend heteroduplex DNA faster. Binds ssDNA in the presence of ADP but not other nucleotides, has ATPase activity that is stimulated by ssDNA and various branched DNA structures, but inhibited by SSB. Does not have RecA's homology-searching function. This chain is DNA repair protein RadA, found in Chlamydia muridarum (strain MoPn / Nigg).